The sequence spans 153 residues: Large ribosomal subunit protein uL30 (153 aa).

The protein belongs to the universal ribosomal protein uL30 family. In terms of assembly, part of the 50S ribosomal subunit.

This is Large ribosomal subunit protein uL30 from Metallosphaera sedula (strain ATCC 51363 / DSM 5348 / JCM 9185 / NBRC 15509 / TH2).